The chain runs to 779 residues: Chloride channel protein CLC-c (779 aa).

Ser-27 carries the phosphoserine modification. 12 consecutive transmembrane segments (helical) span residues 92–112, 142–162, 190–210, 215–235, 257–277, 287–307, 341–361, 380–400, 466–486, 488–508, 520–540, and 541–561; these read TFLK…VGFL, FAFA…CAFI, STLF…FVVG, MVHT…KKYR, GAAA…LFAL, ALLW…RSLI, LAIV…NYLV, IMLV…LPWL, LAIF…IAIP, GLFI…GRLL, SLLG…SLCV, and ILLE…VLLI. The CBS 1 domain occupies 601–659; the sequence is DVVSGALISFSRVEKVGVIWQALKMTRHNGFPVIDEPPFTEASELCGIALRSHLLVLLQ. Ser-672 carries the phosphoserine modification. A CBS 2 domain is found at 713–777; sequence ITNTSPYTVL…VLGLYPHIDP (65 aa). The chain crosses the membrane as a helical span at residues 741–761; it reads HLCVVPKTPGRPPIVGILTRH.

This sequence belongs to the chloride channel (TC 2.A.49) family. As to quaternary structure, homodimer. Interacts with PP2A5. In terms of tissue distribution, broadly expressed in the plant.

Its subcellular location is the membrane. Functionally, voltage-gated chloride channel. The chain is Chloride channel protein CLC-c (CLC-C) from Arabidopsis thaliana (Mouse-ear cress).